The primary structure comprises 254 residues: MPQQIELRNIALQAAQPLVHGVSLTLQRGRVLALVGGSGSGKSLTCAATLGILPAGVRQTAGEILADGKPVSPCALRGIKIATIMQNPRSAFNPLHTMHTHARETCLALGKPADDATLTAAIEAVGLENAARVLKLYPFEMSGGMLQRMMIAMAVLCESPFIIADEPTTDLDVVAQARILDLLESIMQKQAPGMLLVTHDMGVVARLADDVAVMSHGKIVEQGDVETLFNAPKHAVTRSLVSAHLALYGMELAS.

The ABC transporter domain maps to 2-241 (PQQIELRNIA…PKHAVTRSLV (240 aa)). 36 to 43 (GGSGSGKS) serves as a coordination point for ATP.

This sequence belongs to the ABC transporter superfamily. Nickel importer (TC 3.A.1.5.3) family. In terms of assembly, the complex is composed of two ATP-binding proteins (NikD and NikE), two transmembrane proteins (NikB and NikC) and a solute-binding protein (NikA).

The protein resides in the cell inner membrane. It carries out the reaction Ni(2+)(out) + ATP + H2O = Ni(2+)(in) + ADP + phosphate + H(+). Its function is as follows. Part of the ABC transporter complex NikABCDE involved in nickel import. Responsible for energy coupling to the transport system. This is Nickel import ATP-binding protein NikD from Escherichia coli (strain UTI89 / UPEC).